Consider the following 89-residue polypeptide: Small ribosomal subunit protein uS15 (89 aa).

It belongs to the universal ribosomal protein uS15 family. Part of the 30S ribosomal subunit. Forms a bridge to the 50S subunit in the 70S ribosome, contacting the 23S rRNA.

One of the primary rRNA binding proteins, it binds directly to 16S rRNA where it helps nucleate assembly of the platform of the 30S subunit by binding and bridging several RNA helices of the 16S rRNA. In terms of biological role, forms an intersubunit bridge (bridge B4) with the 23S rRNA of the 50S subunit in the ribosome. In Chlorobium phaeovibrioides (strain DSM 265 / 1930) (Prosthecochloris vibrioformis (strain DSM 265)), this protein is Small ribosomal subunit protein uS15.